The sequence spans 351 residues: Cyanuric acid amidohydrolase (351 aa).

The tract at residues 1 to 96 (MPSLRAHVFR…HWTVFARETV (96 aa)) is RU A. Residues Arg-53 and 77–78 (SG) each bind substrate. Residues 103 to 240 (ALAIGVSRTP…HEIIVLGMSA (138 aa)) form an RU B region. Residue Lys-153 is part of the active site. Substrate is bound by residues Arg-185 and 223–224 (SS). Ser-223 (nucleophile) is an active-site residue. The tract at residues 246 to 351 (LSIDHAVMRD…PVAIIVEKEQ (106 aa)) is RU C. A Mg(2+)-binding site is contributed by Glu-283. Residues Arg-310 and 329–330 (SG) contribute to the substrate site. The Mg(2+) site is built by Ala-332, Gln-335, Gly-336, Pro-337, and Gly-340.

It belongs to the cyclic amide hydrolase (CyAH) family. As to quaternary structure, homotetramer.

The catalysed reaction is cyanurate + H2O = 1-carboxybiuret + H(+). It participates in xenobiotic degradation; atrazine degradation; biuret from cyanurate: step 1/1. Inhibited by barbituric acid. Functionally, responsible for the hydrolysis of cyanuric acid, an intermediate formed during catabolism of s-triazine based compounds in herbicides such as atrazine and polymers such as melamine. Catalyzes the hydrolytic opening of the s-triazine ring of cyanuric acid (2,4,6-trihydroxy-s-triazine) to yield carbon dioxide and carboxybiuret, which spontaneously decarboxylates to biuret. The polypeptide is Cyanuric acid amidohydrolase (Rhizobium johnstonii (strain DSM 114642 / LMG 32736 / 3841) (Rhizobium leguminosarum bv. viciae)).